Reading from the N-terminus, the 283-residue chain is Dihydropteroate synthase type-1 (283 aa).

Residues 6–262 (VTVFGILNLT…APGDLRSAIT (257 aa)) form the Pterin-binding domain. A Mg(2+)-binding site is contributed by asparagine 13. (7,8-dihydropterin-6-yl)methyl diphosphate contacts are provided by residues aspartate 86, asparagine 105, aspartate 177, lysine 216, and 250 to 252 (RTH).

Belongs to the DHPS family. As to quaternary structure, homodimer or homotrimer. Requires Mg(2+) as cofactor.

The enzyme catalyses (7,8-dihydropterin-6-yl)methyl diphosphate + 4-aminobenzoate = 7,8-dihydropteroate + diphosphate. It participates in cofactor biosynthesis; tetrahydrofolate biosynthesis; 7,8-dihydrofolate from 2-amino-4-hydroxy-6-hydroxymethyl-7,8-dihydropteridine diphosphate and 4-aminobenzoate: step 1/2. Catalyzes the condensation of para-aminobenzoate (pABA) with 6-hydroxymethyl-7,8-dihydropterin diphosphate (DHPt-PP) to form 7,8-dihydropteroate (H2Pte), the immediate precursor of folate derivatives. Implicated in resistance to sulfonamide. This is Dihydropteroate synthase type-1 (sulI) from Mycolicibacterium fortuitum (Mycobacterium fortuitum).